The chain runs to 410 residues: Lissencephaly-1 homolog (410 aa).

The region spanning 7 to 39 is the LisH domain; the sequence is QRDELNRAIADYLRSNGYEEAYSVFKKEAELDM. A coiled-coil region spans residues 56 to 82; sequence TSVIRLQKKVMELESKLNEAKEEFTSG. WD repeat units lie at residues 106 to 147, 148 to 189, 190 to 229, 232 to 271, 274 to 333, 336 to 377, and 379 to 410; these read GHRS…RTLK, GHTD…RTMH, GHDH…CVKT, GHRE…CKAE, EHEH…CLMT, GHDN…KTLN, and HEHF…WECR.

It belongs to the WD repeat LIS1/nudF family. As to quaternary structure, can self-associate. Component of the cytosolic PAF-AH (I) heterotetrameric enzyme, which is composed of PAFAH1B1 (beta), PAFAH1B2 (alpha2) and PAFAH1B3 (alpha1) subunits. The catalytic activity of the enzyme resides in the alpha1 (PAFAH1B3) and alpha2 (PAFAH1B2) subunits, whereas the beta subunit (PAFAH1B1) has regulatory activity. Trimer formation is not essential for the catalytic activity. Interacts with dynein, dynactin, nde1 and ndel1.

The protein localises to the cytoplasm. It localises to the cytoskeleton. It is found in the microtubule organizing center. The protein resides in the centrosome. Functionally, regulatory subunit (beta subunit) of the cytosolic type I platelet-activating factor (PAF) acetylhydrolase (PAF-AH (I)), an enzyme that catalyzes the hydrolyze of the acetyl group at the sn-2 position of PAF and its analogs and participates in PAF inactivation. Regulates the PAF-AH (I) activity in a catalytic dimer composition-dependent manner. Positively regulates the activity of the minus-end directed microtubule motor protein dynein. May enhance dynein-mediated microtubule sliding by targeting dynein to the microtubule plus end. Required for several dynein- and microtubule-dependent processes such as the maintenance of Golgi integrity, the peripheral transport of microtubule fragments and the coupling of the nucleus and centrosome. May be required for proliferation of neuronal precursors and neuronal migration. This chain is Lissencephaly-1 homolog (pafah1b1), found in Xenopus laevis (African clawed frog).